The chain runs to 422 residues: Phosphoribosylamine--glycine ligase (422 aa).

The region spanning 107-314 (KAFMQRHGIP…LFDVLDRAID (208 aa)) is the ATP-grasp domain. ATP is bound at residue 133–194 (VDREGAPIVI…EEFLAGEEAS (62 aa)). Mg(2+)-binding residues include glutamate 284 and asparagine 286.

It belongs to the GARS family. Mg(2+) is required as a cofactor. Mn(2+) serves as cofactor.

The enzyme catalyses 5-phospho-beta-D-ribosylamine + glycine + ATP = N(1)-(5-phospho-beta-D-ribosyl)glycinamide + ADP + phosphate + H(+). It participates in purine metabolism; IMP biosynthesis via de novo pathway; N(1)-(5-phospho-D-ribosyl)glycinamide from 5-phospho-alpha-D-ribose 1-diphosphate: step 2/2. The sequence is that of Phosphoribosylamine--glycine ligase from Ralstonia nicotianae (strain ATCC BAA-1114 / GMI1000) (Ralstonia solanacearum).